A 258-amino-acid polypeptide reads, in one-letter code: Probable glycerol uptake facilitator protein (258 aa).

A run of 2 helical transmembrane segments spans residues 11 to 31 (WWFLAELIGTFILIIFGNGAV) and 50 to 70 (TVALTWGIGVLFGVLTANAIF). Residues 77–79 (NPA) carry the NPA 1 motif. 3 helical membrane passes run 95–115 (ALIWPGFVIGILAQFLGAMIA), 152–172 (FLTEFIATLILIGGVVAASHF), and 180–200 (VPPGFMGLWLVAGIIIAFGGA). The NPA 2 signature appears at 206–208 (NPA). The chain crosses the membrane as a helical span at residues 233-253 (WIPVIAPLSAGLVLSIIIGFS).

It belongs to the MIP/aquaporin (TC 1.A.8) family.

The protein localises to the cell membrane. It carries out the reaction glycerol(in) = glycerol(out). In terms of biological role, mediates glycerol diffusion across the cytoplasmic membrane via a pore-type mechanism. This Mycoplasma genitalium (strain ATCC 33530 / DSM 19775 / NCTC 10195 / G37) (Mycoplasmoides genitalium) protein is Probable glycerol uptake facilitator protein (glpF).